The sequence spans 188 residues: FMN-dependent NADPH-azoreductase (188 aa).

The protein belongs to the azoreductase type 2 family. Homotetramer. FMN serves as cofactor.

Its function is as follows. Catalyzes the reductive cleavage of azo bond in aromatic azo compounds to the corresponding amines. Requires NADPH, but not NADH, as an electron donor for its activity. In Staphylococcus aureus (strain MSSA476), this protein is FMN-dependent NADPH-azoreductase (azo1).